The sequence spans 377 residues: Nitric oxide reductase FlRd-NAD(+) reductase (377 aa).

Belongs to the FAD-dependent oxidoreductase family. The cofactor is FAD.

It is found in the cytoplasm. It catalyses the reaction 2 reduced [nitric oxide reductase rubredoxin domain] + NAD(+) + H(+) = 2 oxidized [nitric oxide reductase rubredoxin domain] + NADH. It participates in nitrogen metabolism; nitric oxide reduction. Functionally, one of at least two accessory proteins for anaerobic nitric oxide (NO) reductase. Reduces the rubredoxin moiety of NO reductase. This is Nitric oxide reductase FlRd-NAD(+) reductase from Escherichia coli O81 (strain ED1a).